The sequence spans 152 residues: Vasotocin-neurophysin VT 1 (152 aa).

Positions Met-1–Ala-19 are cleaved as a signal peptide. An intrachain disulfide couples Cys-20 to Cys-25. At Gly-28 the chain carries Glycine amide. Intrachain disulfides connect Cys-40-Cys-84, Cys-43-Cys-57, Cys-51-Cys-74, Cys-58-Cys-64, Cys-91-Cys-103, Cys-97-Cys-115, and Cys-104-Cys-109.

Belongs to the vasopressin/oxytocin family.

The protein localises to the secreted. In terms of biological role, vasotocin is an antidiuretic hormone. The chain is Vasotocin-neurophysin VT 1 from Catostomus commersonii (White sucker).